The primary structure comprises 262 residues: ATP synthase subunit a (262 aa).

The next 5 helical transmembrane spans lie at 26–46 (VHIDTLFFSILAAVIFLFVFS), 86–106 (VAPLALTIFCWVFIMNAIDLI), 130–150 (DISATLGMSICVFFLILFYTI), 204–226 (LIFILIAVMYSANMAIAALGIPL), and 240–260 (LQAFIFMMLTVVYLSIAYNKA).

This sequence belongs to the ATPase A chain family. In terms of assembly, F-type ATPases have 2 components, CF(1) - the catalytic core - and CF(0) - the membrane proton channel. CF(1) has five subunits: alpha(3), beta(3), gamma(1), delta(1), epsilon(1). CF(0) has three main subunits: a(1), b(2) and c(9-12). The alpha and beta chains form an alternating ring which encloses part of the gamma chain. CF(1) is attached to CF(0) by a central stalk formed by the gamma and epsilon chains, while a peripheral stalk is formed by the delta and b chains.

The protein resides in the cell inner membrane. Functionally, key component of the proton channel; it plays a direct role in the translocation of protons across the membrane. This Haemophilus influenzae (strain 86-028NP) protein is ATP synthase subunit a.